The primary structure comprises 276 residues: 28 kDa ribonucleoprotein, chloroplastic (276 aa).

The transit peptide at 1–57 (MATNGCLISLPPFFTTTKSISSYPFLSTQLKPISLSSSLPTLLSLNKRTTQFPTFVS) directs the protein to the chloroplast. RRM domains follow at residues 97 to 175 (AKLF…KAAP) and 191 to 269 (YRIY…AAEE).

It localises to the plastid. The protein localises to the chloroplast. Probably involved in the 3'-end processing of chloroplast mRNA's. This Nicotiana sylvestris (Wood tobacco) protein is 28 kDa ribonucleoprotein, chloroplastic.